We begin with the raw amino-acid sequence, 1079 residues long: Lon protease homolog, mitochondrial (1079 aa).

A mitochondrion-targeting transit peptide spans 1-60 (MLRPRTYVRKLAWRCPRKSQLGLRLATSVSSHKSLPLPMNFDISHSQSAFRAYQDIIHRN). The span at 61 to 116 (KSVGDDEPSQRSENENNPSESDKDSNQDPETPKKDKESENDKEPEKEKDIENDNKV) shows a compositional bias: basic and acidic residues. 2 disordered regions span residues 61-158 (KSVG…VDPV) and 262-285 (LTTP…ESFP). Positions 117–131 (SSESNENVTLASSNT) are enriched in polar residues. Residues 132–143 (GGAAPPNGNNNG) are compositionally biased toward low complexity. The region spanning 165–391 (LLAIPMKDRP…RALELLKVEL (227 aa)) is the Lon N-terminal domain. A compositionally biased stretch (basic and acidic residues) spans 262 to 281 (LTTPSSEKEAKSEEPSKEDA). 543 to 550 (GPPGTGKT) serves as a coordination point for ATP. Residues 756–765 (ALDSSKEKEG) show a composition bias toward basic and acidic residues. Residues 756 to 832 (ALDSSKEKEG…SEEDQQPEPK (77 aa)) form a disordered region. Residues 768 to 779 (ASSEEANVNSES) show a composition bias toward low complexity. The segment covering 780-802 (TKSNTSQAEPVAESSTDISTKSK) has biased composition (polar residues). The span at 803 to 818 (VASEKIETKEKKETNK) shows a compositional bias: basic and acidic residues. A Lon proteolytic domain is found at 865–1053 (FPPPGVATGL…QEVFDKIFPN (189 aa)). Residues Ser959 and Lys1002 contribute to the active site.

Belongs to the peptidase S16 family. Homohexamer or homoheptamer. Organized in a ring with a central cavity.

The protein resides in the mitochondrion matrix. The enzyme catalyses Hydrolysis of proteins in presence of ATP.. Its function is as follows. ATP-dependent serine protease that mediates the selective degradation of misfolded, unassembled or oxidatively damaged polypeptides as well as certain short-lived regulatory proteins in the mitochondrial matrix. May also have a chaperone function in the assembly of inner membrane protein complexes. Participates in the regulation of mitochondrial gene expression and in the maintenance of the integrity of the mitochondrial genome. Binds to mitochondrial DNA in a site-specific manner. This chain is Lon protease homolog, mitochondrial, found in Debaryomyces hansenii (strain ATCC 36239 / CBS 767 / BCRC 21394 / JCM 1990 / NBRC 0083 / IGC 2968) (Yeast).